A 1437-amino-acid chain; its full sequence is MAISTSLLIVALLIKLCLVNTAPPISKCFQDGILIAELKSSSGISEFCIKDDISILKSEITYSKNDTGIFMHSKVFRHWTVADWKQCNHTSAGGSTNVLEVDKNLNLVAKNYMCTRPCVITIDKENAQLLFQTEQLNQFEVTGTTISTGWFKSKTSVSLDNTCEHIKVTCGKKSLQFHACFKQHMSCVRFLHRSVLPGYMASSICQNIELIIIIILTLAIFIFMCIITRTYICYLMLPLFAPIAYLYGWLYNRSCKKCICCGLAYHPFTNCGSYCVCGSRFETSDRMRLHRESGLCQGFKSLRVARSLCKSKGSSLVISILTAMLILSFITPLEAMTTNYPDDKKFTLKEVNDIVLGRDMEQELKSSILILMSICGIGIILIFFGLTVLLEIVLELIAKRSTIFCKECNLIHDKKSMTYRGDFTNKCGFCPCGELEDPEGLVIHTTRKSCTYYIKIRNLKLIMLIFSIVILMQNATMLVVAGENCWTNTEIKADCVGPLIGPSACTNKGSKTYKTVAQELVTASKITQLDADKYVLLGDTIESALDAITSQKHYSAMHLLETMFLMKHCDYYKVYEHNSGYSQTKWRLIAIANSFDICTNTPTPNFCKCLSDSSCSTTTLNFATSMNATYTSKVEFFNHDFTLFLDIFEAAFPGSATAFLFKKIKEKNPYQAFEMMGKIANKYPNNKLLVVILKYGQYMVGLSHASTYQLKQEWVAKSLSLTRAQRTGLKMSMANAEPGPATKECSDAKTIACLTPKFQVEVNNLMSCGASPNFKIYVKTGELYKAHDRNSVWCLNDMHCLTPYTPANAEIITTMKKMDCWQDNPKQPTDEYAIPKRSCQMKDRGLCNSGADKWKIIKCDNHKLFYTDALERRDPASIVGSNHCFSEKCQIERYPINPTSLTNCEWLYRAVRPEYIKKLSLQTIEEYKKAIADKLTHTLQLYHFAPLLENLPHIKPTYKYITAQGTYTADGIEGASITTSIPALSGTSVGFKINAKDGTDLLDIVVYIKASVVKSIYNHIYDTGPTININSKHDELCTGQCPKKIPADPNWLTFSQERTSRWGCEEFGCLAINTGCVYGSCQDVIRTETKVYRKANEETVMLTVCITYPGHTFCTDVNAHEPKITDELELQFKTIDIKSLPNLVAVTNHKLYTGQINDLGTFGQMCGNVQKTNTSHTGAGTPKFDYTCYSASRKDIIIRRCYNNNYDSCRLLNQESDLLFDDNHETLVVYNNKRLNGELALKLLLGDIQYKLYTENMELELEAKCVGCVGCFESYQCNLQITSSLDETALYLVPVSHFHDRIQIKTTKKDYAMKISCTRDPGDKASFRVCGKSYDFNFHTVPKNDKIEVNVGDETSYIKEKDNRCGRWLCRVRDEGLSVIFEPLNNFFGNYLNMFLYILGGIILLFLALYILMPMCARLRDELKRNERLHQMEMKKR.

Positions 1–21 (MAISTSLLIVALLIKLCLVNT) are cleaved as a signal peptide. Residues 22–207 (APPISKCFQD…GYMASSICQN (186 aa)) are Lumenal-facing. N-linked (GlcNAc...) asparagine; by host glycans are attached at residues N65 and N88. The helical transmembrane segment at 208 to 228 (IELIIIIILTLAIFIFMCIIT) threads the bilayer. The Cytoplasmic segment spans residues 229 to 312 (RTYICYLMLP…RVARSLCKSK (84 aa)). Residues 313–333 (GSSLVISILTAMLILSFITPL) form a helical membrane-spanning segment. Residues 334–373 (EAMTTNYPDDKKFTLKEVNDIVLGRDMEQELKSSILILMS) are Lumenal-facing. The chain crosses the membrane as a helical span at residues 374-394 (ICGIGIILIFFGLTVLLEIVL). The Cytoplasmic segment spans residues 395–460 (ELIAKRSTIF…TYYIKIRNLK (66 aa)). Residues 461 to 481 (LIMLIFSIVILMQNATMLVVA) form a helical membrane-spanning segment. The Lumenal portion of the chain corresponds to 482–1391 (GENCWTNTEI…EPLNNFFGNY (910 aa)). N-linked (GlcNAc...) asparagine; by host glycosylation is found at N627 and N1173. A helical membrane pass occupies residues 1392–1412 (LNMFLYILGGIILLFLALYIL). Residues 1413–1437 (MPMCARLRDELKRNERLHQMEMKKR) are Cytoplasmic-facing.

Belongs to the orthobunyavirus envelope glycoprotein family. In terms of assembly, glycoprotein C and Glycoprotein N interact with each other. In terms of processing, specific enzymatic cleavages in vivo yield mature proteins including nonstructural protein NSm, Glycoprotein C, and Glycoprotein N.

Its subcellular location is the virion membrane. The protein resides in the host Golgi apparatus membrane. It is found in the host endoplasmic reticulum membrane. In terms of biological role, glycoprotein C and Glycoprotein N interact with each other and are present at the surface of the virion. They are able to attach the virion to a cell receptor and to promote fusion of membranes after endocytosis of the virion. This Culex protein is Envelopment polyprotein (GP).